Reading from the N-terminus, the 419-residue chain is Serine hydroxymethyltransferase (419 aa).

(6S)-5,6,7,8-tetrahydrofolate contacts are provided by residues leucine 121 and 125-127; that span reads GHL. An N6-(pyridoxal phosphate)lysine modification is found at lysine 230. Residue 354 to 356 coordinates (6S)-5,6,7,8-tetrahydrofolate; that stretch reads SPF.

Belongs to the SHMT family. Homodimer. The cofactor is pyridoxal 5'-phosphate.

It localises to the cytoplasm. It carries out the reaction (6R)-5,10-methylene-5,6,7,8-tetrahydrofolate + glycine + H2O = (6S)-5,6,7,8-tetrahydrofolate + L-serine. The protein operates within one-carbon metabolism; tetrahydrofolate interconversion. Its pathway is amino-acid biosynthesis; glycine biosynthesis; glycine from L-serine: step 1/1. In terms of biological role, catalyzes the reversible interconversion of serine and glycine with tetrahydrofolate (THF) serving as the one-carbon carrier. This reaction serves as the major source of one-carbon groups required for the biosynthesis of purines, thymidylate, methionine, and other important biomolecules. Also exhibits THF-independent aldolase activity toward beta-hydroxyamino acids, producing glycine and aldehydes, via a retro-aldol mechanism. The polypeptide is Serine hydroxymethyltransferase (Prochlorococcus marinus (strain SARG / CCMP1375 / SS120)).